A 149-amino-acid chain; its full sequence is Transcriptional repressor NrdR (149 aa).

The segment at 3 to 34 is a zinc-finger region; the sequence is CPFCFAVDTKVIDSRLVGEGSSVRRRRQCLVC. Residues 49 to 139 enclose the ATP-cone domain; that stretch reads PRVVKSNDVR…VYRSFEDIKE (91 aa).

This sequence belongs to the NrdR family. It depends on Zn(2+) as a cofactor.

Negatively regulates transcription of bacterial ribonucleotide reductase nrd genes and operons by binding to NrdR-boxes. This is Transcriptional repressor NrdR from Escherichia fergusonii (strain ATCC 35469 / DSM 13698 / CCUG 18766 / IAM 14443 / JCM 21226 / LMG 7866 / NBRC 102419 / NCTC 12128 / CDC 0568-73).